The primary structure comprises 235 residues: MOB kinase activator 2 (235 aa).

Residues 1–22 are disordered; the sequence is MDWLMGKSKAKPNGKKPAAEEK. Zn(2+) is bound by residues cysteine 78, cysteine 83, histidine 157, and histidine 162. Positions 213-235 are disordered; the sequence is NSGATGDGANSGASGAQNHVKER.

The protein belongs to the MOB1/phocein family. Binds STK38 and STK38L. Post-translationally, phosphorylated.

The protein resides in the nucleus. The protein localises to the cytoplasm. Its subcellular location is the perinuclear region. Functionally, stimulates the autophosphorylation and kinase activity of STK38 and STK38L. In Mus musculus (Mouse), this protein is MOB kinase activator 2 (Mob2).